Reading from the N-terminus, the 102-residue chain is Protamine-2 (102 aa).

Residues S8, S10, and S37 each carry the phosphoserine modification. Residues 16-102 are disordered; sequence VYGQQLRGQE…RTRRRRCRRH (87 aa). Positions 49-102 are enriched in basic residues; it reads GHSHYRRRHCSRRRLHRIHRQQHRSCGRRRRRSCRQRRRHRRGCRTRRRRCRRH.

Belongs to the protamine P2 family. Interacts with TDRP. In terms of processing, proteolytic processing into mature chains is required for histone eviction during spermatogenesis. Transition proteins (TNP1 and TNP2) are required for processing. As to expression, testis.

It localises to the nucleus. It is found in the chromosome. Protamines substitute for histones in the chromatin of sperm during the haploid phase of spermatogenesis. They compact sperm DNA into a highly condensed, stable and inactive complex. The chain is Protamine-2 (PRM2) from Hylobates lar (Lar gibbon).